The following is a 246-amino-acid chain: Adenosylcobinamide-GDP ribazoletransferase (246 aa).

7 helical membrane-spanning segments follow: residues 30–50, 51–71, 105–125, 131–151, 167–189, 193–210, and 226–246; these read VNWY…VHQA, GLVL…WVYV, VGAM…GAVA, GWGS…LLSI, ISSG…AGWY, LQVM…LWFS, and GAVI…SWWL.

It belongs to the CobS family. Mg(2+) is required as a cofactor.

It localises to the cell membrane. It catalyses the reaction alpha-ribazole + adenosylcob(III)inamide-GDP = adenosylcob(III)alamin + GMP + H(+). The catalysed reaction is alpha-ribazole 5'-phosphate + adenosylcob(III)inamide-GDP = adenosylcob(III)alamin 5'-phosphate + GMP + H(+). It participates in cofactor biosynthesis; adenosylcobalamin biosynthesis; adenosylcobalamin from cob(II)yrinate a,c-diamide: step 7/7. In terms of biological role, joins adenosylcobinamide-GDP and alpha-ribazole to generate adenosylcobalamin (Ado-cobalamin). Also synthesizes adenosylcobalamin 5'-phosphate from adenosylcobinamide-GDP and alpha-ribazole 5'-phosphate. The polypeptide is Adenosylcobinamide-GDP ribazoletransferase (Brevibacillus brevis (strain 47 / JCM 6285 / NBRC 100599)).